The primary structure comprises 242 residues: 1-(5-phosphoribosyl)-5-[(5-phosphoribosylamino)methylideneamino] imidazole-4-carboxamide isomerase (242 aa).

D10 (proton acceptor) is an active-site residue. The active-site Proton donor is D132.

The protein belongs to the HisA/HisF family.

The protein localises to the cytoplasm. The catalysed reaction is 1-(5-phospho-beta-D-ribosyl)-5-[(5-phospho-beta-D-ribosylamino)methylideneamino]imidazole-4-carboxamide = 5-[(5-phospho-1-deoxy-D-ribulos-1-ylimino)methylamino]-1-(5-phospho-beta-D-ribosyl)imidazole-4-carboxamide. The protein operates within amino-acid biosynthesis; L-histidine biosynthesis; L-histidine from 5-phospho-alpha-D-ribose 1-diphosphate: step 4/9. The polypeptide is 1-(5-phosphoribosyl)-5-[(5-phosphoribosylamino)methylideneamino] imidazole-4-carboxamide isomerase (Methanopyrus kandleri (strain AV19 / DSM 6324 / JCM 9639 / NBRC 100938)).